Reading from the N-terminus, the 408-residue chain is Aminoacylase-1A (408 aa).

Histidine 80 is a binding site for Zn(2+). Aspartate 82 is a catalytic residue. Residue aspartate 113 participates in Zn(2+) binding. Glutamate 147 acts as the Proton acceptor in catalysis. Positions 148, 175, and 373 each coordinate Zn(2+). Phosphoserine is present on serine 408.

Belongs to the peptidase M20A family. In terms of assembly, homodimer. Requires Zn(2+) as cofactor. Post-translationally, the N-terminus is blocked.

The protein resides in the cytoplasm. The catalysed reaction is an N-acyl-L-amino acid + H2O = an L-alpha-amino acid + a carboxylate. It catalyses the reaction an N-acetyl-L-cysteine-S-conjugate + H2O = an S-substituted L-cysteine + acetate. Its function is as follows. Involved in the hydrolysis of N-acylated or N-acetylated amino acids (except L-aspartate). The chain is Aminoacylase-1A (Acy1a) from Rattus norvegicus (Rat).